The sequence spans 187 residues: Elongation factor P (187 aa).

Belongs to the elongation factor P family.

Its subcellular location is the cytoplasm. It participates in protein biosynthesis; polypeptide chain elongation. Its function is as follows. Involved in peptide bond synthesis. Stimulates efficient translation and peptide-bond synthesis on native or reconstituted 70S ribosomes in vitro. Probably functions indirectly by altering the affinity of the ribosome for aminoacyl-tRNA, thus increasing their reactivity as acceptors for peptidyl transferase. The chain is Elongation factor P from Desulfatibacillum aliphaticivorans.